The sequence spans 369 residues: N-succinylamino acid racemase (369 aa).

Lys-163 (proton donor) is an active-site residue. Mg(2+) contacts are provided by Asp-188, Glu-213, and Asp-238. Lys-262 acts as the Proton acceptor in catalysis.

It belongs to the mandelate racemase/muconate lactonizing enzyme family. MenC type 2 subfamily. As to quaternary structure, homooctamer. Tetramer of dimers. It depends on a divalent metal cation as a cofactor.

The enzyme catalyses (1R,6R)-6-hydroxy-2-succinyl-cyclohexa-2,4-diene-1-carboxylate = 2-succinylbenzoate + H2O. In terms of biological role, acts as a N-succinylamino acid racemase (NSAR) that catalyzes the racemization of N-succinyl-L-phenylglycine. Also converts 2-succinyl-6-hydroxy-2,4-cyclohexadiene-1-carboxylate (SHCHC) to 2-succinylbenzoate (OSB). Catalyzes both N-succinylamino acid racemization and OSB synthesis at equivalent rates. However, NSAR activity is probably the protein's biological function, because menaquinone biosynthesis genes are missing in this species. The sequence is that of N-succinylamino acid racemase from Thermus thermophilus (strain ATCC 27634 / DSM 579 / HB8).